A 65-amino-acid polypeptide reads, in one-letter code: Small ribosomal subunit protein bS21A (65 aa).

The protein belongs to the bacterial ribosomal protein bS21 family.

The chain is Small ribosomal subunit protein bS21A from Francisella tularensis subsp. tularensis (strain FSC 198).